We begin with the raw amino-acid sequence, 296 residues long: Protoheme IX farnesyltransferase (296 aa).

9 consecutive transmembrane segments (helical) span residues 9–29 (VTKP…FLLA), 36–56 (YPLF…GCVF), 84–104 (AVSL…LWFG), 108–128 (LACW…SLYM), 133–153 (VYGT…GYCA), 163–183 (LILL…IAIF), 209–229 (ITLY…GGYA), 234–254 (LVVA…GYKV), and 265–285 (FGFS…DFMV).

This sequence belongs to the UbiA prenyltransferase family. Protoheme IX farnesyltransferase subfamily.

It is found in the cell inner membrane. It catalyses the reaction heme b + (2E,6E)-farnesyl diphosphate + H2O = Fe(II)-heme o + diphosphate. It functions in the pathway porphyrin-containing compound metabolism; heme O biosynthesis; heme O from protoheme: step 1/1. In terms of biological role, converts heme B (protoheme IX) to heme O by substitution of the vinyl group on carbon 2 of heme B porphyrin ring with a hydroxyethyl farnesyl side group. The sequence is that of Protoheme IX farnesyltransferase from Citrobacter koseri (strain ATCC BAA-895 / CDC 4225-83 / SGSC4696).